Consider the following 803-residue polypeptide: Urocanate reductase (803 aa).

Position 258 is an FMN phosphoryl serine (S258). FAD is bound by residues A311, E330, N338, T339, G343, G344, and D573. The active-site Proton donor is R632. Residues H739, E768, A783, and L784 each coordinate FAD.

The protein belongs to the FAD-dependent oxidoreductase 2 family. FRD/SDH subfamily. Requires FAD as cofactor. FMN serves as cofactor.

The enzyme catalyses dihydrourocanate + A = urocanate + AH2. Catalyzes the two-electron reduction of urocanate to dihydrourocanate (also named imidazole propionate or deamino-histidine). Dihydrourocanate is present at higher concentrations in subjects with type 2 diabetes, and directly impairs glucose tolerance and insulin signaling at the level of insulin receptor substrate (IRS) through activation of p38 gamma (MAPK12)-p62-mTORC1. Therefore, the UrdA enzyme from the gut bacteria S.mutans strain UA159 may contribute to the pathogenesis of type 2 diabetes by producing the microbial metabolite dihydrourocanate. The polypeptide is Urocanate reductase (Streptococcus mutans serotype c (strain ATCC 700610 / UA159)).